The sequence spans 282 residues: Bis(5'-nucleosyl)-tetraphosphatase, symmetrical (282 aa).

Belongs to the Ap4A hydrolase family.

The catalysed reaction is P(1),P(4)-bis(5'-adenosyl) tetraphosphate + H2O = 2 ADP + 2 H(+). In terms of biological role, hydrolyzes diadenosine 5',5'''-P1,P4-tetraphosphate to yield ADP. The chain is Bis(5'-nucleosyl)-tetraphosphatase, symmetrical from Escherichia fergusonii (strain ATCC 35469 / DSM 13698 / CCUG 18766 / IAM 14443 / JCM 21226 / LMG 7866 / NBRC 102419 / NCTC 12128 / CDC 0568-73).